We begin with the raw amino-acid sequence, 878 residues long: Pyruvate dehydrogenase phosphatase regulatory subunit, mitochondrial (878 aa).

Residues 1–26 (MLPRLLAVVRGPGSCRGWREGSPARG) constitute a mitochondrion transit peptide.

It belongs to the GcvT family. Heterodimer of a catalytic (PDP1) and a regulatory (PDPR) subunit.

The protein localises to the mitochondrion matrix. Its function is as follows. Decreases the sensitivity of PDP1 to magnesium ions, and this inhibition is reversed by the polyamine spermine. The polypeptide is Pyruvate dehydrogenase phosphatase regulatory subunit, mitochondrial (PDPR) (Bos taurus (Bovine)).